An 844-amino-acid polypeptide reads, in one-letter code: DNA mismatch repair protein MutS (844 aa).

602 to 609 (GPNMSGKS) serves as a coordination point for ATP.

Belongs to the DNA mismatch repair MutS family.

Functionally, this protein is involved in the repair of mismatches in DNA. It is possible that it carries out the mismatch recognition step. This protein has a weak ATPase activity. The sequence is that of DNA mismatch repair protein MutS from Streptococcus pneumoniae (strain ATCC 700669 / Spain 23F-1).